Consider the following 189-residue polypeptide: Elongation factor P (189 aa).

Belongs to the elongation factor P family.

Its subcellular location is the cytoplasm. It participates in protein biosynthesis; polypeptide chain elongation. Its function is as follows. Involved in peptide bond synthesis. Stimulates efficient translation and peptide-bond synthesis on native or reconstituted 70S ribosomes in vitro. Probably functions indirectly by altering the affinity of the ribosome for aminoacyl-tRNA, thus increasing their reactivity as acceptors for peptidyl transferase. The polypeptide is Elongation factor P (Rhizobium meliloti (strain 1021) (Ensifer meliloti)).